Reading from the N-terminus, the 728-residue chain is Polyribonucleotide nucleotidyltransferase (728 aa).

Residues Asp488 and Asp494 each coordinate Mg(2+). The KH domain occupies 555 to 614; sequence PRMITMKIHPDKIREVIGKGGSTIQALTKETGTTIDIQEDGTITIASTSTDGMAEAKRRI. Residues 624-692 enclose the S1 motif domain; sequence GKIYNGTVLK…EKGRLRLSLK (69 aa). Residues 702–728 form a disordered region; the sequence is ISPVNAGEAAPAPAPAAAPATPSDQQQ. The span at 710 to 721 shows a compositional bias: low complexity; it reads AAPAPAPAAAPA.

The protein belongs to the polyribonucleotide nucleotidyltransferase family. Mg(2+) is required as a cofactor.

It localises to the cytoplasm. The enzyme catalyses RNA(n+1) + phosphate = RNA(n) + a ribonucleoside 5'-diphosphate. Involved in mRNA degradation. Catalyzes the phosphorolysis of single-stranded polyribonucleotides processively in the 3'- to 5'-direction. In Cupriavidus pinatubonensis (strain JMP 134 / LMG 1197) (Cupriavidus necator (strain JMP 134)), this protein is Polyribonucleotide nucleotidyltransferase.